The following is a 372-amino-acid chain: Fatty acid 2-hydroxylase (372 aa).

The Cytochrome b5 heme-binding domain occupies 8 to 86 (AASFTPAEVQ…LEQYYVGELR (79 aa)). Heme is bound by residues His-43 and His-69. 2 consecutive transmembrane segments (helical) span residues 168–188 (VWYSVPIIWVPLVLYLSWSYY) and 213–233 (SVFIGLFVLGMLFWTFVEYVI). One can recognise a Fatty acid hydroxylase domain in the interval 219 to 361 (FVLGMLFWTF…TKLWDYFFHT (143 aa)). Positions 234, 239, 257, 260, and 261 each coordinate Zn(2+). Helical transmembrane passes span 268-288 (SRLVFPPVPASLVIAFFYVFL) and 290-310 (LILPETVGGIIFAGGLLGYVL). The Zn(2+) site is built by His-315, His-319, His-336, His-339, and His-340.

Belongs to the sterol desaturase family. SCS7 subfamily. The cofactor is Zn(2+). As to expression, expressed in brain (at protein level). Detected in cerebellum and forebrain. Expression in the white matter is mainly restricted in oligodendrocytes. Expressed in stomach, kidney, skin and testis. Expressed in sebaceous gland.

Its subcellular location is the endoplasmic reticulum membrane. It localises to the microsome membrane. It catalyses the reaction a 1,2-saturated fatty acid + 2 Fe(II)-[cytochrome b5] + O2 + 2 H(+) = a (R)-2-hydroxy fatty acid + 2 Fe(III)-[cytochrome b5] + H2O. It carries out the reaction hexadecanoate + 2 Fe(II)-[cytochrome b5] + O2 + 2 H(+) = (R)-2-hydroxyhexadecanoate + 2 Fe(III)-[cytochrome b5] + H2O. The catalysed reaction is octadecanoate + 2 Fe(II)-[cytochrome b5] + O2 + 2 H(+) = (R)-2-hydroxyoctadecanoate + 2 Fe(III)-[cytochrome b5] + H2O. The enzyme catalyses docosanoate + 2 Fe(II)-[cytochrome b5] + O2 + 2 H(+) = 2-hydroxydocosanoate + 2 Fe(III)-[cytochrome b5] + H2O. It catalyses the reaction tetracosanoate + 2 Fe(II)-[cytochrome b5] + O2 + 2 H(+) = (R)-2-hydroxytetracosanoate + 2 Fe(III)-[cytochrome b5] + H2O. It functions in the pathway sphingolipid metabolism; galactosylceramide biosynthesis. Its pathway is lipid metabolism; fatty acid metabolism. In terms of biological role, catalyzes the hydroxylation of free fatty acids at the C-2 position to produce 2-hydroxy fatty acids, which are building blocks of sphingolipids and glycosphingolipids common in neural tissue and epidermis. FA2H is stereospecific for the production of (R)-2-hydroxy fatty acids. Plays an essential role in the synthesis of galactosphingolipids of the myelin sheath. Responsible for the synthesis of sphingolipids and glycosphingolipids involved in the formation of epidermal lamellar bodies critical for skin permeability barrier. Participates in the synthesis of glycosphingolipids and a fraction of type II wax diesters in sebaceous gland, specifically regulating hair follicle homeostasis. Involved in the synthesis of sphingolipids of plasma membrane rafts, controlling lipid raft mobility and trafficking of raft-associated proteins. The sequence is that of Fatty acid 2-hydroxylase from Mus musculus (Mouse).